The primary structure comprises 190 residues: uncharacterized protein (190 aa).

Positions Met-1 to Asp-185 constitute a Macro domain.

This is an uncharacterized protein from Pyrococcus horikoshii (strain ATCC 700860 / DSM 12428 / JCM 9974 / NBRC 100139 / OT-3).